The sequence spans 640 residues: Probable potassium transport system protein Kup (640 aa).

12 helical membrane-spanning segments follow: residues 26–46, 69–89, 117–137, 155–175, 186–206, 224–244, 265–285, 297–317, 355–375, 384–404, 415–435, and 437–457; these read IAGL…TSPL, ILSL…VLFI, AWVL…DGMI, PAFR…LFVI, IFGP…IAGI, FFAD…LAIT, WFLV…ALIL, LLVP…ATII, IYVP…VVGF, AYGI…FVVV, AGLF…ATTV, and ILAG…LLTT.

Belongs to the HAK/KUP transporter (TC 2.A.72) family.

The protein resides in the cell inner membrane. It catalyses the reaction K(+)(in) + H(+)(in) = K(+)(out) + H(+)(out). Its function is as follows. Transport of potassium into the cell. Likely operates as a K(+):H(+) symporter. The chain is Probable potassium transport system protein Kup from Aromatoleum aromaticum (strain DSM 19018 / LMG 30748 / EbN1) (Azoarcus sp. (strain EbN1)).